The primary structure comprises 309 residues: Probable cell wall protein PGA50 (309 aa).

Positions 1–17 (MKLNLLLLLFIVELVAA) are cleaved as a signal peptide. Asn67, Asn115, Asn248, Asn267, and Asn277 each carry an N-linked (GlcNAc...) asparagine glycan. The interval 241 to 281 (STTTFSSNGTSSGTTNGDTRAETKSSNSTQTSSSDKNSSQI) is disordered. The GPI-anchor amidated serine moiety is linked to residue Ser286. A propeptide spans 287–309 (TGVANFVASFGMGTLLLFVLSLC) (removed in mature form).

It belongs to the IHD1 family. In terms of processing, the GPI-anchor is attached to the protein in the endoplasmic reticulum and serves to target the protein to the cell surface. There, the glucosamine-inositol phospholipid moiety is cleaved off and the GPI-modified mannoprotein is covalently attached via its lipidless GPI glycan remnant to the 1,6-beta-glucan of the outer cell wall layer.

Its subcellular location is the secreted. It localises to the cell wall. The protein resides in the membrane. Functionally, probable GPI-anchored cell wall protein that may be involved in cell wall organization, hyphal growth, as well as in virulence. This Candida albicans (strain SC5314 / ATCC MYA-2876) (Yeast) protein is Probable cell wall protein PGA50 (PGA50).